We begin with the raw amino-acid sequence, 271 residues long: MILEKIVETTKDRINQEKRRLPEEVIKKSATEMAIKQGFGSSSSISRDKFFFEEVMSRPGVNFLCEIKRASPSKGMIAKDFDPVFIAKEYEEGGAAAISVLTEPTFFLGKDDYLMEVKKEVGIPVLRKDFILEAYQIYQAKLLGADCVLLIVSILTEEQLTGFLKICDELGLSALVETHNQEEVMRALQCGARIIGVNNRNLSTFEVSIENSLKLRTLVPKEAIFIAESGISTPEQIKELKEAGVNGVLIGETLMKASNKKLMIRNLKSLL.

Belongs to the TrpC family.

The catalysed reaction is 1-(2-carboxyphenylamino)-1-deoxy-D-ribulose 5-phosphate + H(+) = (1S,2R)-1-C-(indol-3-yl)glycerol 3-phosphate + CO2 + H2O. It functions in the pathway amino-acid biosynthesis; L-tryptophan biosynthesis; L-tryptophan from chorismate: step 4/5. The chain is Indole-3-glycerol phosphate synthase from Lachnoclostridium phytofermentans (strain ATCC 700394 / DSM 18823 / ISDg) (Clostridium phytofermentans).